Here is a 333-residue protein sequence, read N- to C-terminus: tRNA pseudouridine synthase B (333 aa).

The active-site Nucleophile is D46.

Belongs to the pseudouridine synthase TruB family. Type 1 subfamily.

The enzyme catalyses uridine(55) in tRNA = pseudouridine(55) in tRNA. Responsible for synthesis of pseudouridine from uracil-55 in the psi GC loop of transfer RNAs. In Gluconobacter oxydans (strain 621H) (Gluconobacter suboxydans), this protein is tRNA pseudouridine synthase B.